Consider the following 240-residue polypeptide: Proline-rich antigen homolog (240 aa).

Composition is skewed to pro residues over residues 1–31 (MTEQ…PAAP) and 38–78 (APPP…PPGP). The tract at residues 1 to 78 (MTEQPPPGGS…GGYAPPPPGP (78 aa)) is disordered. The RDD domain maps to 89–233 (TPWITRVLAA…KRQTLADKIM (145 aa)). Transmembrane regions (helical) follow at residues 98–118 (AFID…IMLV), 142–162 (SMIG…YLVW), and 203–223 (LAHF…LWDA).

This sequence belongs to the mycobacterial Pra family.

The protein resides in the cell membrane. In Mycobacterium tuberculosis (strain CDC 1551 / Oshkosh), this protein is Proline-rich antigen homolog.